The sequence spans 343 residues: Ribosomal RNA small subunit methyltransferase C (343 aa).

It belongs to the methyltransferase superfamily. RsmC family. As to quaternary structure, monomer.

It is found in the cytoplasm. The catalysed reaction is guanosine(1207) in 16S rRNA + S-adenosyl-L-methionine = N(2)-methylguanosine(1207) in 16S rRNA + S-adenosyl-L-homocysteine + H(+). Functionally, specifically methylates the guanine in position 1207 of 16S rRNA in the 30S particle. This Shigella flexneri protein is Ribosomal RNA small subunit methyltransferase C.